Reading from the N-terminus, the 227-residue chain is Chaperone protein FocC (227 aa).

A signal peptide spans 1-21 (MRIWAVLASFLVFFYIPQSYA).

Belongs to the periplasmic pilus chaperone family.

Its subcellular location is the periplasm. Involved in the biogenesis of the F1C fimbriae. The polypeptide is Chaperone protein FocC (focC) (Escherichia coli O6:H1 (strain CFT073 / ATCC 700928 / UPEC)).